The following is a 67-amino-acid chain: ATP synthase F(0) complex subunit 8 (67 aa).

Residues 8–24 form a helical membrane-spanning segment; that stretch reads TWFTTILSTSFSIIHRL. K54 carries the post-translational modification N6-acetyllysine; alternate. At K54 the chain carries N6-succinyllysine; alternate. K57 carries the post-translational modification N6-acetyllysine.

This sequence belongs to the ATPase protein 8 family. As to quaternary structure, component of the ATP synthase complex composed at least of ATP5F1A/subunit alpha, ATP5F1B/subunit beta, ATP5MC1/subunit c (homooctomer), MT-ATP6/subunit a, MT-ATP8/subunit 8, ATP5ME/subunit e, ATP5MF/subunit f, ATP5MG/subunit g, ATP5MK/subunit k, ATP5MJ/subunit j, ATP5F1C/subunit gamma, ATP5F1D/subunit delta, ATP5F1E/subunit epsilon, ATP5PF/subunit F6, ATP5PB/subunit b, ATP5PD/subunit d, ATP5PO/subunit OSCP. ATP synthase complex consists of a soluble F(1) head domain (subunits alpha(3) and beta(3)) - the catalytic core - and a membrane F(0) domain - the membrane proton channel (subunits c, a, 8, e, f, g, k and j). These two domains are linked by a central stalk (subunits gamma, delta, and epsilon) rotating inside the F1 region and a stationary peripheral stalk (subunits F6, b, d, and OSCP). Interacts with PRICKLE3.

Its subcellular location is the mitochondrion membrane. In terms of biological role, subunit 8, of the mitochondrial membrane ATP synthase complex (F(1)F(0) ATP synthase or Complex V) that produces ATP from ADP in the presence of a proton gradient across the membrane which is generated by electron transport complexes of the respiratory chain. ATP synthase complex consist of a soluble F(1) head domain - the catalytic core - and a membrane F(1) domain - the membrane proton channel. These two domains are linked by a central stalk rotating inside the F(1) region and a stationary peripheral stalk. During catalysis, ATP synthesis in the catalytic domain of F(1) is coupled via a rotary mechanism of the central stalk subunits to proton translocation. In vivo, can only synthesize ATP although its ATP hydrolase activity can be activated artificially in vitro. Part of the complex F(0) domain. This Glis glis (Fat dormouse) protein is ATP synthase F(0) complex subunit 8.